Consider the following 436-residue polypeptide: Adenylosuccinate synthetase (436 aa).

Residues 12 to 18 (GDEGKGK) and 40 to 42 (GHT) each bind GTP. Asp13 acts as the Proton acceptor in catalysis. 2 residues coordinate Mg(2+): Asp13 and Gly40. Residues 13 to 16 (DEGK), 38 to 41 (NAGH), Thr128, Arg142, Gln223, Thr238, and Arg302 each bind IMP. His41 functions as the Proton donor in the catalytic mechanism. Substrate is bound at residue 298–304 (TTTGRRR). GTP contacts are provided by residues Arg304, 330 to 332 (KLD), and 412 to 414 (SLG).

The protein belongs to the adenylosuccinate synthetase family. As to quaternary structure, homodimer. The cofactor is Mg(2+).

The protein resides in the cytoplasm. The enzyme catalyses IMP + L-aspartate + GTP = N(6)-(1,2-dicarboxyethyl)-AMP + GDP + phosphate + 2 H(+). It participates in purine metabolism; AMP biosynthesis via de novo pathway; AMP from IMP: step 1/2. Its function is as follows. Plays an important role in the de novo pathway of purine nucleotide biosynthesis. Catalyzes the first committed step in the biosynthesis of AMP from IMP. This is Adenylosuccinate synthetase from Prochlorococcus marinus (strain MIT 9515).